Consider the following 228-residue polypeptide: Urease accessory protein UreF (228 aa).

The protein belongs to the UreF family. In terms of assembly, ureD, UreF and UreG form a complex that acts as a GTP-hydrolysis-dependent molecular chaperone, activating the urease apoprotein by helping to assemble the nickel containing metallocenter of UreC. The UreE protein probably delivers the nickel.

The protein localises to the cytoplasm. In terms of biological role, required for maturation of urease via the functional incorporation of the urease nickel metallocenter. The sequence is that of Urease accessory protein UreF from Brucella ovis (strain ATCC 25840 / 63/290 / NCTC 10512).